Reading from the N-terminus, the 735-residue chain is Disintegrin and metalloproteinase domain-containing protein 2 (735 aa).

Residues 1-15 form the signal peptide; the sequence is MLCLLLLLCGLASLG. Residues 16–176 constitute a propeptide that is removed on maturation; sequence GPLKKYVENS…KIKSIKSSVR (161 aa). At 16–680 the chain is on the extracellular side; the sequence is GPLKKYVENS…EGAYHTKSRK (665 aa). 3 N-linked (GlcNAc...) asparagine glycosylation sites follow: asparagine 55, asparagine 220, and asparagine 288. The 198-residue stretch at 178 to 375 folds into the Peptidase M12B domain; it reads HYIEMHIIVE…QVSQCLQNQP (198 aa). 4 cysteine pairs are disulfide-bonded: cysteine 287-cysteine 370, cysteine 329-cysteine 354, cysteine 331-cysteine 336, and cysteine 442-cysteine 455. Asparagine 353 is a glycosylation site (N-linked (GlcNAc...) asparagine). The region spanning 384–470 is the Disintegrin domain; that stretch reads NPVCGNNRVE…ACQEDLYVIN (87 aa). N-linked (GlcNAc...) asparagine glycans are attached at residues asparagine 456 and asparagine 564. The EGF-like domain maps to 610-643; that stretch reads LGYDCTPATCSDHGVCNNKRHCHCNPTYVPPNCE. Cystine bridges form between cysteine 614-cysteine 625, cysteine 619-cysteine 631, and cysteine 633-cysteine 642. The helical transmembrane segment at 681-701 threads the bilayer; the sequence is WPFFLIIPFFVIFSVLVATVV. Residues 702–735 are Cytoplasmic-facing; the sequence is KVYYQKKKWKTEDYANDENIESESEPKSSKVSSK. Positions 716 to 735 are disordered; that stretch reads ANDENIESESEPKSSKVSSK. Serine 723 is subject to Phosphoserine.

Heterodimer with ADAM1/fertilin subunit alpha. Post-translationally, the signal and the metalloprotease domain are cleaved during the epididymal maturation of the spermatozoa. Expressed specifically in testis.

The protein localises to the membrane. In terms of biological role, sperm surface membrane protein that may be involved in sperm-egg plasma membrane adhesion and fusion during fertilization. Could have a direct role in sperm-zona binding or migration of sperm from the uterus into the oviduct. Interactions with egg membrane could be mediated via binding between its disintegrin-like domain to one or more integrins receptors on the egg. This is a non catalytic metalloprotease-like protein. This is Disintegrin and metalloproteinase domain-containing protein 2 (ADAM2) from Cavia porcellus (Guinea pig).